We begin with the raw amino-acid sequence, 217 residues long: Large ribosomal subunit protein uL3 (217 aa).

The protein belongs to the universal ribosomal protein uL3 family. In terms of assembly, part of the 50S ribosomal subunit. Forms a cluster with proteins L14 and L19.

In terms of biological role, one of the primary rRNA binding proteins, it binds directly near the 3'-end of the 23S rRNA, where it nucleates assembly of the 50S subunit. This Mycobacterium ulcerans (strain Agy99) protein is Large ribosomal subunit protein uL3.